The sequence spans 1256 residues: Cohesin subunit SA-3 (1256 aa).

Over residues 1–22 the composition is skewed to low complexity; it reads MPTLWSPSTQHHGSSSGSMSSP. The segment at 1-110 is disordered; it reads MPTLWSPSTQ…GGNDKNKSVP (110 aa). Residues 72–83 show a composition bias toward basic residues; sequence RNVRKRAAKRPP. Residues 324 to 409 form the SCD domain; the sequence is FVHRYRDILP…NRFKDRMVSM (86 aa). Disordered regions lie at residues 1096 to 1169 and 1230 to 1256; these read RRLQ…GPEL and KLLH…MEDF. Over residues 1113–1125 the composition is skewed to polar residues; it reads NSGPTTPTLTSTA. The segment covering 1126-1140 has biased composition (basic residues); the sequence is VKRRQSPRTVGKRQK. The span at 1144–1166 shows a compositional bias: pro residues; sequence GPGPGPGPGPGPGPGPGPGPGPG. Ser-1234 is modified (phosphoserine).

It belongs to the SCC3 family. Component of the meiosis-specific cohesin complex, which also contains the SMC1 (SMC1A or SMC1B) and SMC3 heterodimer. Such complex likely contains RAD21, or the meiosis-specific related protein REC8. Interacts with CCDC79/TERB1; recruiting cohesin to telomeres to develop structural rigidity. In terms of processing, phosphorylated. In terms of tissue distribution, testis specific.

The protein resides in the nucleus. It is found in the chromosome. In terms of biological role, meiosis specific component of cohesin complex. The cohesin complex is required for the cohesion of sister chromatids after DNA replication. The cohesin complex apparently forms a large proteinaceous ring within which sister chromatids can be trapped. At anaphase, the complex is cleaved and dissociates from chromatin, allowing sister chromatids to segregate. The meiosis-specific cohesin complex probably replaces mitosis specific cohesin complex when it dissociates from chromatin during prophase I. The polypeptide is Cohesin subunit SA-3 (Stag3) (Rattus norvegicus (Rat)).